We begin with the raw amino-acid sequence, 454 residues long: Keratin, type I cuticular Ha5 (454 aa).

Residues 1 to 97 (MASKCLKASF…FGEGILTGNE (97 aa)) form a head region. In terms of domain architecture, IF rod spans 97–407 (EKETMQFLND…GLLDSEDCKL (311 aa)). Positions 98 to 125 (KETMQFLNDRLASYLEKCGSWSGRTRSW) are coil 1A. Positions 134–142 (SNSALPVPD) are linker 1. The interval 143–243 (YQSYFQTIEE…HEEEVNSLRC (101 aa)) is coil 1B. The segment at 244-259 (QLGDRLNVEVDAAPPV) is linker 12. Residues 260–403 (DLNRVLNEMR…NTYRGLLDSE (144 aa)) form a coil 2 region. The interval 404-454 (DCKLPCNPCAPDHSPSKSCLPCLPAASCGPGMARTTCSPRPICVPCPGSRF) is tail.

This sequence belongs to the intermediate filament family.

In Bos taurus (Bovine), this protein is Keratin, type I cuticular Ha5.